We begin with the raw amino-acid sequence, 327 residues long: Mitochondrial coenzyme A transporter SLC25A42 (327 aa).

Solcar repeat units follow at residues 34–120 (KSVL…YKKL), 132–217 (LTPI…LKKL), and 227–315 (PYTF…TQIL). The next 6 membrane-spanning stretches (helical) occupy residues 36–56 (VLNS…AVAP), 92–112 (LWRG…IQFC), 138–158 (LLAG…LDLV), 192–209 (GFTP…ISFF), 233–253 (LLFG…LDVV), and 296–316 (VKGP…QILL).

It belongs to the mitochondrial carrier (TC 2.A.29) family.

The protein resides in the mitochondrion inner membrane. The catalysed reaction is ADP(out) + CoA(in) = ADP(in) + CoA(out). The enzyme catalyses 3'-dephospho-CoA(in) + ADP(out) = 3'-dephospho-CoA(out) + ADP(in). It catalyses the reaction adenosine 3',5'-bisphosphate(in) + ADP(out) = adenosine 3',5'-bisphosphate(out) + ADP(in). It carries out the reaction AMP(in) + ADP(out) = AMP(out) + ADP(in). The catalysed reaction is dADP(in) + ADP(out) = dADP(out) + ADP(in). The enzyme catalyses ADP(in) + ATP(out) = ADP(out) + ATP(in). Its function is as follows. Mitochondrial carrier mediating the transport of coenzyme A (CoA) in mitochondria in exchange for intramitochondrial (deoxy)adenine nucleotides and adenosine 3',5'-diphosphate. This is Mitochondrial coenzyme A transporter SLC25A42 (slc25a42) from Xenopus laevis (African clawed frog).